A 289-amino-acid chain; its full sequence is 4-hydroxybenzoate octaprenyltransferase (289 aa).

Transmembrane regions (helical) follow at residues 21–40, 95–115, 116–136, 138–158, 161–181, 213–233, 236–256, and 268–288; these read PIGT…LAAG, VLAL…TMNS, LTIA…FMKR, IPIP…MAYA, ANAL…WTIA, IIGV…QLMG, AWYY…QRLI, and FLNN…NYLL.

It belongs to the UbiA prenyltransferase family. It depends on Mg(2+) as a cofactor.

It localises to the cell inner membrane. It carries out the reaction all-trans-octaprenyl diphosphate + 4-hydroxybenzoate = 4-hydroxy-3-(all-trans-octaprenyl)benzoate + diphosphate. Its pathway is cofactor biosynthesis; ubiquinone biosynthesis. Its function is as follows. Catalyzes the prenylation of para-hydroxybenzoate (PHB) with an all-trans polyprenyl group. Mediates the second step in the final reaction sequence of ubiquinone-8 (UQ-8) biosynthesis, which is the condensation of the polyisoprenoid side chain with PHB, generating the first membrane-bound Q intermediate 3-octaprenyl-4-hydroxybenzoate. The sequence is that of 4-hydroxybenzoate octaprenyltransferase from Aeromonas salmonicida (strain A449).